Reading from the N-terminus, the 395-residue chain is MRRLFTSESVTEGHPDKVADQISDAILDAMLEQDPKSRVAVETLVTTGLVIVAGEVTTRAYVEIPDIVRKTILEIGYTRAKYGFDGETCGVLTSIHSQSPDIALGVDKALEVKSGEEVADELEALGAGDQGIMFGYATNETPEYMPLPITLAHRLAMRLAEVRKKGILPFLRPDGKTQVTIEYEDDKPVRVDTVLISTQHDPDISQADLREAIIEHVINPVIPEEYRDDKMKILVNPTGRFVLGGPMADTGLTGRKIIVDTYGGWVPHGGGAFSGKDPTKVDRSAHYMARYVAKNVVAAGLADKFLIQLSYAIGVAKPVSILIDTFGTAKVDEEKLLKVITEIFDFRPGAIIKKLNLLRPIYRKTAAYGHFGRNEEEFTWEKLDMVDELKRAFNM.

Residue histidine 14 participates in ATP binding. Aspartate 16 lines the Mg(2+) pocket. K(+) is bound at residue glutamate 42. 2 residues coordinate L-methionine: glutamate 55 and glutamine 98. The segment at 98-108 (QSPDIALGVDK) is flexible loop. ATP contacts are provided by residues 174-176 (DGK), 240-241 (RF), aspartate 249, 255-256 (RK), alanine 272, and lysine 276. Aspartate 249 is an L-methionine binding site. Position 280 (lysine 280) interacts with L-methionine.

Belongs to the AdoMet synthase family. Homotetramer; dimer of dimers. Requires Mg(2+) as cofactor. K(+) serves as cofactor.

It is found in the cytoplasm. The catalysed reaction is L-methionine + ATP + H2O = S-adenosyl-L-methionine + phosphate + diphosphate. Its pathway is amino-acid biosynthesis; S-adenosyl-L-methionine biosynthesis; S-adenosyl-L-methionine from L-methionine: step 1/1. Catalyzes the formation of S-adenosylmethionine (AdoMet) from methionine and ATP. The overall synthetic reaction is composed of two sequential steps, AdoMet formation and the subsequent tripolyphosphate hydrolysis which occurs prior to release of AdoMet from the enzyme. The chain is S-adenosylmethionine synthase from Thermotoga neapolitana (strain ATCC 49049 / DSM 4359 / NBRC 107923 / NS-E).